We begin with the raw amino-acid sequence, 436 residues long: Cytochrome b5-related protein (436 aa).

The Cytochrome b5 heme-binding domain occupies 16 to 100; the sequence is PTYRNSALIT…IAKYKVRDAA (85 aa). Residues His-59 and His-82 each contribute to the heme site.

Muscle.

Its function is as follows. May play a role in muscle cell metabolism. This is Cytochrome b5-related protein (Cyt-b5-r) from Drosophila melanogaster (Fruit fly).